The sequence spans 584 residues: MFS-type transporter gkaD (584 aa).

Low complexity predominate over residues 1–11 (MAVDTETTTTT). The tract at residues 1 to 60 (MAVDTETTTTTIPVTDSDRIDDQNNLTSNAIPHASEKTVPDSPASEQNEVSDESEDKPSK) is disordered. N25 carries an N-linked (GlcNAc...) asparagine glycan. Helical transmembrane passes span 65–85 (FGFYAIIVALALTSLLTSLEA), 99–119 (LGGASLYVWVVNGYYLTQTAF), 134–154 (WPMICSAAMFTIGSGVAGGSK), 167–187 (GIGSGGILVLTEIIICDLLPL), 196–216 (MIVSLVGIGAALGPLFGGLIV), 223–243 (WVFYLNVPIGGVACLMLFFFL), 262–282 (WIGNVLFVMSMVSILIALSWA), and 293–313 (VVVPLVLGFVGSAAFVVYEGS). N-linked (GlcNAc...) asparagine glycosylation occurs at N328. The next 6 membrane-spanning stretches (helical) occupy residues 334-354 (AFAVTFLHTLSSVSVMYFLPV), 369-389 (VQLLPTILFMIPGAIAGGTLL), 398-418 (LQHGGLAFMIIGFGLLTLLDA), 425-445 (WVGYQLLGALGTGLALPVLLP), 462-482 (TWSFMRTYGFIWGATIATAVF), and 536-556 (LNVVWYVSLAFAGLGFLLVFL).

It belongs to the major facilitator superfamily.

It localises to the membrane. Its function is as follows. MFS-type transporter; part of the gene cluster that mediates the biosynthesis of GKK1032, fungal natural products containing a macrocyclic para-cyclophane connected to a decahydrofluorene ring system that show potent antitumor activities. This is MFS-type transporter gkaD from Penicillium citrinum.